Here is a 396-residue protein sequence, read N- to C-terminus: N-terminal EF-hand calcium-binding protein 3 (396 aa).

Residues 14 to 34 show a composition bias toward pro residues; that stretch reads PPAPQPQPQTPRHPQLAPDPG. The segment at 14 to 36 is disordered; the sequence is PPAPQPQPQTPRHPQLAPDPGPA. The EF-hand domain maps to 36-71; the sequence is AGHTLFQDVFRRADKNDDGKLSFEEFQNYFADGVLS. Ca(2+) is bound by residues Asp-49, Asn-51, Asp-53, Lys-55, and Glu-60. Residues 181–190 are required for interaction with APBA3; that stretch reads VEAQSRLCGS. The segment at 197–220 is disordered; the sequence is ALRSVSRSSTWSPGSSDTGRSSEA. Residues 206–217 are compositionally biased toward polar residues; it reads TWSPGSSDTGRS. Positions 296–385 constitute an ABM domain; sequence LMAQRQVQVA…RAPDTLTTVF (90 aa).

As to quaternary structure, interacts with the N-terminal domain of APBA2. Interacts with NEK2. Interacts with APBA3; APBA3 seems to mediate the interaction between NECAB3 and HIF1AN. In terms of processing, phosphorylated by NEK2. Strongly expressed in heart and skeletal muscle, moderately in brain and pancreas.

The protein resides in the golgi apparatus. Its function is as follows. Inhibits the interaction of APBA2 with amyloid-beta precursor protein (APP), and hence allows formation of amyloid-beta. May enhance the activity of HIF1A and thus promote glycolysis under normoxic conditions; the function requires its ABM domain and may implicate the stabilization of the interaction between HIF1AN and APBA3. The protein is N-terminal EF-hand calcium-binding protein 3 (NECAB3) of Homo sapiens (Human).